The following is a 124-amino-acid chain: Small ribosomal subunit protein uS13 (124 aa).

Residues 95-124 are disordered; that stretch reads GLPVNGQRTRTNARSSKGPRRTVAGKKKAR. The segment covering 100–109 has biased composition (polar residues); the sequence is GQRTRTNARS. A compositionally biased stretch (basic residues) spans 111–124; it reads KGPRRTVAGKKKAR.

It belongs to the universal ribosomal protein uS13 family. Part of the 30S ribosomal subunit. Forms a loose heterodimer with protein S19. Forms two bridges to the 50S subunit in the 70S ribosome.

Its function is as follows. Located at the top of the head of the 30S subunit, it contacts several helices of the 16S rRNA. In the 70S ribosome it contacts the 23S rRNA (bridge B1a) and protein L5 of the 50S subunit (bridge B1b), connecting the 2 subunits; these bridges are implicated in subunit movement. Contacts the tRNAs in the A and P-sites. The sequence is that of Small ribosomal subunit protein uS13 from Tropheryma whipplei (strain TW08/27) (Whipple's bacillus).